A 410-amino-acid polypeptide reads, in one-letter code: Peptidase T (410 aa).

H79 contacts Zn(2+). The active site involves D81. D142 serves as a coordination point for Zn(2+). E176 (proton acceptor) is an active-site residue. Zn(2+)-binding residues include E177, D199, and H381.

It belongs to the peptidase M20B family. The cofactor is Zn(2+).

The protein localises to the cytoplasm. The catalysed reaction is Release of the N-terminal residue from a tripeptide.. Its function is as follows. Cleaves the N-terminal amino acid of tripeptides. The polypeptide is Peptidase T (Geobacillus sp. (strain WCH70)).